The chain runs to 983 residues: MKNLFNFFKTSSELRLAYRLLKQINQKRSFYGAMTDFDLANQTNIFKKRLANGEKLKDIRVDAFAVAREATKRILGKTPYDVQILGGLILDMGSVAEMKTGEGKTIASIPPVYLNALLGQGVIVSTVNEYLAERDAEDNGKVYNFLGLTVGINKTEMDANTKRMMYNADITYSVHSELGFDYLRDNMVFSAAEKVQRGLNFCLIDEVDSILIDEAKTPLIISGGKTNLPAQYLSANQFVNTLIAEDFYIDEETKGIKLNDKGIDKANAFFGLRNLYEIQNSEIVHRIQNALRANKVMKRDVEYIVQDGKIALVDQFTGRIMAGRSYSEGLQQALQAKEGLEIEPETKTLATITYQNFFRLFKKLSGMTGTAKTEEQEFIDVYNMRVNVIPTNKPMIRKDEKDEIFATSHEKNQAIISEVERVHKMGQPILIGTSQVVDSETLSEMLNQKGLYHTVLNAKQNQLEAEIIAKAGRKNAITIATNMAGRGTDIILEPGVTELGGLYILGTDKAEARRIDNQLRGRSGRQGDVGISRFFISLQDQLFRRFTNFDQIFGAYGQTNGAIKGKYIHAVLLAAQKKIEGFNFDMRKTVLSYDDVIRQQRDLIYAQRDILLQIENFDHYIQKMIIRAVDIILSYDFIILPNQEIHYKNLINFLNDNLSRITHFNFGQIGIENYPIEQLNEFLIKQLETIYFKQIQSVLKENLGKTYFESERYIILSTLDSQWQNHIDTIDKLRSSANLVQYSQKNPYQIFTEEATKKFNILVAESAYQAIVSLFNNSNAEKIEYIKAILSDGTAISYPADSPQEIIDQIIASNEERIAAARKAKEEKQPEFIEKQLAKLKIEKVESGEEFELWKIGDSKLVNLKKEMPLDEKQNILVKMQQEQLEMMSEEEKNLIQEQNLEIVEIEEIEEEIQNENPQKVEFVDFKNDPDAYNKLIFGADYADKQLISSEEEDNNEKTNINNNEDLERTKGEAQQTAKNPNE.

ATP contacts are provided by residues Gln83, 101–105 (GEGKT), and Asp489. The tract at residues 948 to 983 (ISSEEEDNNEKTNINNNEDLERTKGEAQQTAKNPNE) is disordered. The segment covering 973–983 (EAQQTAKNPNE) has biased composition (polar residues).

It belongs to the SecA family. Monomer and homodimer. Part of the essential Sec protein translocation apparatus which comprises SecA, SecYEG and auxiliary proteins SecDF. Other proteins may also be involved.

Its subcellular location is the cell membrane. It is found in the cytoplasm. The catalysed reaction is ATP + H2O + cellular proteinSide 1 = ADP + phosphate + cellular proteinSide 2.. Part of the Sec protein translocase complex. Interacts with the SecYEG preprotein conducting channel. Has a central role in coupling the hydrolysis of ATP to the transfer of proteins into and across the cell membrane, serving as an ATP-driven molecular motor driving the stepwise translocation of polypeptide chains across the membrane. The sequence is that of Protein translocase subunit SecA from Mesomycoplasma hyopneumoniae (strain J / ATCC 25934 / NCTC 10110) (Mycoplasma hyopneumoniae).